The following is a 415-amino-acid chain: Corticotropin-releasing factor receptor 1 (415 aa).

The signal sequence occupies residues 1-23 (MGRRPQLRLVKALLLLGLNPVST). Topologically, residues 24–111 (SLQDQRCENL…CQEILNEEKK (88 aa)) are extracellular. Intrachain disulfides connect Cys-30-Cys-54, Cys-44-Cys-87, and Cys-68-Cys-102. N-linked (GlcNAc...) asparagine glycans are attached at residues Asn-38, Asn-45, Asn-78, Asn-90, and Asn-98. Residues 99 to 108 (YSECQEILNE) are important for peptide agonist binding. Residues 112–142 (SKVHYHVAVIINYLGHCISLVALLVAFVLFL) form a helical membrane-spanning segment. The Cytoplasmic portion of the chain corresponds to 143-149 (RLRSIRC). The helical transmembrane segment at 150-174 (LRNIIHWNLISAFILRNATWFVVQL) threads the bilayer. Residues 175–189 (TVSPEVHQSNVAWCR) lie on the Extracellular side of the membrane. A disulfide bond links Cys-188 and Cys-258. A helical membrane pass occupies residues 190-218 (LVTAAYNYFHVTNFFWMFGEGCYLHTAIV). Residues 219–225 (LTYSTDR) are Cytoplasmic-facing. A helical membrane pass occupies residues 226-253 (LRKWMFVCIGWGVPFPIIVAWAIGKLHY). Topologically, residues 254–269 (DNEKCWFGKRPGVYTD) are extracellular. A helical transmembrane segment spans residues 270-295 (YIYQGPMILVLLINFIFLFNIVRILM). Positions 280–290 (LLINFIFLFNI) are important for antagonist binding. Topologically, residues 296-306 (TKLRASTTSET) are cytoplasmic. Ser-301 bears the Phosphoserine; by PKA mark. Residues 307–331 (IQYRKAVKATLVLLPLLGITYMLFF) form a helical membrane-spanning segment. Residues 332–338 (VNPGEDE) lie on the Extracellular side of the membrane. A helical membrane pass occupies residues 339–368 (VSRVVFIYFNSFLESFQGFFVSVFYCFLNS). At 369–415 (EVRSAIRKRWRRWQDKHSIRARVARAMSIPTSPTRVSFHSIKQSTAV) the chain is on the cytoplasmic side.

It belongs to the G-protein coupled receptor 2 family. As to quaternary structure, interacts (via N-terminal extracellular domain) with CRH and UCN. Interacts with DLG1; this inhibits endocytosis of CRHR1 after agonist binding. Heterodimer; heterodimerizes with GPER1. C-terminal Ser or Thr residues may be phosphorylated. Post-translationally, phosphorylation at Ser-301 by PKA prevents maximal coupling to Gq-protein, and thereby negatively regulates downstream signaling. As to expression, detected in brain, especially in cerebellum. Detected in pituitary gland, and at lower levels in the olfactory bulb.

The protein localises to the cell membrane. The protein resides in the endosome. In terms of biological role, G-protein coupled receptor for CRH (corticotropin-releasing factor) and UCN (urocortin). Has high affinity for CRH and UCN. Ligand binding causes a conformation change that triggers signaling via guanine nucleotide-binding proteins (G proteins) and down-stream effectors, such as adenylate cyclase. Promotes the activation of adenylate cyclase, leading to increased intracellular cAMP levels. Inhibits the activity of the calcium channel CACNA1H. Required for normal embryonic development of the adrenal gland and for normal hormonal responses to stress. Plays a role in the response to anxiogenic stimuli. This is Corticotropin-releasing factor receptor 1 (Crhr1) from Rattus norvegicus (Rat).